We begin with the raw amino-acid sequence, 399 residues long: 1-deoxy-D-xylulose 5-phosphate reductoisomerase (399 aa).

5 residues coordinate NADPH: threonine 13, glycine 14, serine 15, isoleucine 16, and asparagine 127. Residue lysine 128 participates in 1-deoxy-D-xylulose 5-phosphate binding. Glutamate 129 serves as a coordination point for NADPH. Aspartate 153 provides a ligand contact to Mn(2+). Residues serine 154, glutamate 155, serine 187, and histidine 210 each coordinate 1-deoxy-D-xylulose 5-phosphate. Residue glutamate 155 participates in Mn(2+) binding. Glycine 216 provides a ligand contact to NADPH. Positions 223, 228, 229, and 232 each coordinate 1-deoxy-D-xylulose 5-phosphate. Position 232 (glutamate 232) interacts with Mn(2+).

Belongs to the DXR family. The cofactor is Mg(2+). It depends on Mn(2+) as a cofactor.

It carries out the reaction 2-C-methyl-D-erythritol 4-phosphate + NADP(+) = 1-deoxy-D-xylulose 5-phosphate + NADPH + H(+). Its pathway is isoprenoid biosynthesis; isopentenyl diphosphate biosynthesis via DXP pathway; isopentenyl diphosphate from 1-deoxy-D-xylulose 5-phosphate: step 1/6. Catalyzes the NADPH-dependent rearrangement and reduction of 1-deoxy-D-xylulose-5-phosphate (DXP) to 2-C-methyl-D-erythritol 4-phosphate (MEP). This Bordetella avium (strain 197N) protein is 1-deoxy-D-xylulose 5-phosphate reductoisomerase.